A 246-amino-acid polypeptide reads, in one-letter code: NH(3)-dependent NAD(+) synthetase (246 aa).

29 to 36 serves as a coordination point for ATP; that stretch reads GLSGGIDS. Position 35 (D35) interacts with Mg(2+). Residue R110 participates in deamido-NAD(+) binding. T130 serves as a coordination point for ATP. E135 serves as a coordination point for Mg(2+). ATP contacts are provided by K159 and S181.

Belongs to the NAD synthetase family. In terms of assembly, homodimer.

The enzyme catalyses deamido-NAD(+) + NH4(+) + ATP = AMP + diphosphate + NAD(+) + H(+). It functions in the pathway cofactor biosynthesis; NAD(+) biosynthesis; NAD(+) from deamido-NAD(+) (ammonia route): step 1/1. In terms of biological role, catalyzes the ATP-dependent amidation of deamido-NAD to form NAD. Uses ammonia as a nitrogen source. The protein is NH(3)-dependent NAD(+) synthetase of Campylobacter jejuni subsp. jejuni serotype O:6 (strain 81116 / NCTC 11828).